The primary structure comprises 670 residues: DNA ligase (670 aa).

NAD(+) contacts are provided by residues 36 to 40, 85 to 86, and Glu116; these read DAQYD and SL. The active-site N6-AMP-lysine intermediate is the Lys118. Residues Arg139, Glu174, Lys290, and Lys314 each contribute to the NAD(+) site. Positions 408, 411, 426, and 431 each coordinate Zn(2+). One can recognise a BRCT domain in the interval 591–670; it reads STDQTLSGKT…QDFVKLLQQQ (80 aa).

It belongs to the NAD-dependent DNA ligase family. LigA subfamily. It depends on Mg(2+) as a cofactor. Mn(2+) serves as cofactor.

It catalyses the reaction NAD(+) + (deoxyribonucleotide)n-3'-hydroxyl + 5'-phospho-(deoxyribonucleotide)m = (deoxyribonucleotide)n+m + AMP + beta-nicotinamide D-nucleotide.. Functionally, DNA ligase that catalyzes the formation of phosphodiester linkages between 5'-phosphoryl and 3'-hydroxyl groups in double-stranded DNA using NAD as a coenzyme and as the energy source for the reaction. It is essential for DNA replication and repair of damaged DNA. In Desulforamulus reducens (strain ATCC BAA-1160 / DSM 100696 / MI-1) (Desulfotomaculum reducens), this protein is DNA ligase.